Reading from the N-terminus, the 248-residue chain is 3-deoxy-manno-octulosonate cytidylyltransferase (248 aa).

It belongs to the KdsB family.

It localises to the cytoplasm. It carries out the reaction 3-deoxy-alpha-D-manno-oct-2-ulosonate + CTP = CMP-3-deoxy-beta-D-manno-octulosonate + diphosphate. Its pathway is nucleotide-sugar biosynthesis; CMP-3-deoxy-D-manno-octulosonate biosynthesis; CMP-3-deoxy-D-manno-octulosonate from 3-deoxy-D-manno-octulosonate and CTP: step 1/1. The protein operates within bacterial outer membrane biogenesis; lipopolysaccharide biosynthesis. Activates KDO (a required 8-carbon sugar) for incorporation into bacterial lipopolysaccharide in Gram-negative bacteria. In Cronobacter sakazakii (strain ATCC BAA-894) (Enterobacter sakazakii), this protein is 3-deoxy-manno-octulosonate cytidylyltransferase.